Consider the following 274-residue polypeptide: uncharacterized protein (274 aa).

5 helical membrane passes run 9 to 29 (SLLL…VSIL), 64 to 84 (WFWH…FFIL), 135 to 155 (LAGH…ALLL), 165 to 185 (MSSM…WQNA), and 219 to 239 (IIVY…LVLG).

It belongs to the steroid 5-alpha reductase family.

It is found in the endoplasmic reticulum membrane. This is an uncharacterized protein from Schizosaccharomyces pombe (strain 972 / ATCC 24843) (Fission yeast).